Reading from the N-terminus, the 810-residue chain is Ecotropic viral integration site 5 protein homolog (810 aa).

Residues 1 to 483 (MVTNKMTAAF…EAESQCALKE (483 aa)) form an interaction with alpha-tubulin, gamma-tubulin, BIRC5 and FBXO5 region. Disordered regions lie at residues 49 to 80 (VASP…QLSP) and 98 to 123 (TDSK…SSSA). The segment covering 51–80 (SPSTSLHTTSSSTTLSTPALSPSSPSQLSP) has biased composition (low complexity). Phosphoserine is present on residues Ser-102 and Ser-113. Residues 103–123 (LRSVNGSRRNSGSSLVSSSSA) are compositionally biased toward low complexity. The segment at 128–693 (SHLEEDSWIL…LNKSDSNQYI (566 aa)) is dimerization. In terms of domain architecture, Rab-GAP TBC spans 163-348 (GIPHHFRAIV…RIFDIFMSEG (186 aa)). The segment at 377–810 (QHFQKVIPHQ…RRRESYSTTV (434 aa)) is targeting to the centrosomes. A coiled-coil region spans residues 406–716 (KKMKKLEKEY…LRCLKGQRGF (311 aa)). The segment at 487-810 (KVLDIEKRNN…RRRESYSTTV (324 aa)) is interaction with AURKB and INCENP. Residues Ser-497, Ser-689, Ser-776, and Ser-778 each carry the phosphoserine modification. The interval 756–810 (GFPLHGKSGSMSLDPAVADGSESETEDSVLETRESNQVVQKERPPRRRESYSTTV) is disordered. Residues 785-810 (LETRESNQVVQKERPPRRRESYSTTV) are compositionally biased toward basic and acidic residues.

Dimeric and monomeric. Interacts with alpha- and gamma-tubulin. Interacts with FBXO5. Interacts with the chromosome passenger complex (CPC) which is at least composed of AURKB/aurora-B, BIRC5/survivin, CDCA8/borealin and INCENP. In terms of processing, probably phosphorylated by PLK1; may be required for degradation during mitosis. Post-translationally, ubiquitinated. Degradation during prophase is ubiquitin-dependent. In terms of tissue distribution, expressed in various cell lines (at protein level). Expressed in a wide range of tissues including brain and adrenal.

It localises to the nucleus. It is found in the cytoplasm. Its subcellular location is the cytoskeleton. The protein resides in the microtubule organizing center. The protein localises to the centrosome. It localises to the spindle. Its function is as follows. Functions as a regulator of cell cycle progression by stabilizing the FBXO5 protein and promoting cyclin-A accumulation during interphase. May play a role in cytokinesis. The polypeptide is Ecotropic viral integration site 5 protein homolog (EVI5) (Homo sapiens (Human)).